The sequence spans 357 residues: 2-oxoglutarate-dependent dioxygenase 11 (357 aa).

Residues 207–307 enclose the Fe2OG dioxygenase domain; that stretch reads QPRGLRMAYY…RISAALFHYP (101 aa). Residues His-231, Asp-233, and His-288 each contribute to the Fe cation site. Arg-298 lines the 2-oxoglutarate pocket.

This sequence belongs to the iron/ascorbate-dependent oxidoreductase family. It depends on Fe(2+) as a cofactor. The cofactor is L-ascorbate. In terms of tissue distribution, expressed in shoots.

The protein resides in the cytoplasm. It carries out the reaction melatonin + 2-oxoglutarate + O2 = 2-hydroxymelatonin + succinate + CO2. Its function is as follows. Involved in melatonin degradation. Catalyzes the hydroxylation of melatonin to produce 2-hydroxymelatonin. The polypeptide is 2-oxoglutarate-dependent dioxygenase 11 (Oryza sativa subsp. japonica (Rice)).